The following is a 261-amino-acid chain: Cytochrome c oxidase subunit 3 (261 aa).

Topologically, residues 1–15 (MSHQAHAYHMVDPSP) are mitochondrial matrix. The helical transmembrane segment at 16 to 34 (WPLTGAGAALLMTSGLAMW) threads the bilayer. At 35-40 (FHKNSC) the chain is on the mitochondrial intermembrane side. A helical membrane pass occupies residues 41 to 66 (ILMTLGLILMLLTMYQWWRDIVREGT). Over 67-72 (FLGHHT) the chain is Mitochondrial matrix. A helical membrane pass occupies residues 73-105 (SPVQQGLRYGMILFIISEVCFFAGFFWAFYHAS). Residues 106–128 (LAPTPELGLTWPPTGINPLNPFE) are Mitochondrial intermembrane-facing. The helical transmembrane segment at 129 to 152 (VPLLNTAVLLASGVSVTWAHHSIT) threads the bilayer. Topologically, residues 153–155 (EKN) are mitochondrial matrix. A helical membrane pass occupies residues 156–183 (RTETTQALTLTVLLGLYFTALQIMEYYE). Over 184 to 190 (TPFTMAD) the chain is Mitochondrial intermembrane. A helical membrane pass occupies residues 191–223 (GVYGSTFFVATGFHGLHVIIGSLFLLTCLLRHL). Residues 224 to 232 (QYHFTSKHH) lie on the Mitochondrial matrix side of the membrane. Residues 233 to 256 (FGFEAAAWYWHFVDVVWLFLYISI) traverse the membrane as a helical segment. Residues 257-261 (YWWGS) are Mitochondrial intermembrane-facing.

Belongs to the cytochrome c oxidase subunit 3 family. As to quaternary structure, component of the cytochrome c oxidase (complex IV, CIV), a multisubunit enzyme composed of 14 subunits. The complex is composed of a catalytic core of 3 subunits MT-CO1, MT-CO2 and MT-CO3, encoded in the mitochondrial DNA, and 11 supernumerary subunits COX4I, COX5A, COX5B, COX6A, COX6B, COX6C, COX7A, COX7B, COX7C, COX8 and NDUFA4, which are encoded in the nuclear genome. The complex exists as a monomer or a dimer and forms supercomplexes (SCs) in the inner mitochondrial membrane with NADH-ubiquinone oxidoreductase (complex I, CI) and ubiquinol-cytochrome c oxidoreductase (cytochrome b-c1 complex, complex III, CIII), resulting in different assemblies (supercomplex SCI(1)III(2)IV(1) and megacomplex MCI(2)III(2)IV(2)).

The protein localises to the mitochondrion inner membrane. It catalyses the reaction 4 Fe(II)-[cytochrome c] + O2 + 8 H(+)(in) = 4 Fe(III)-[cytochrome c] + 2 H2O + 4 H(+)(out). Functionally, component of the cytochrome c oxidase, the last enzyme in the mitochondrial electron transport chain which drives oxidative phosphorylation. The respiratory chain contains 3 multisubunit complexes succinate dehydrogenase (complex II, CII), ubiquinol-cytochrome c oxidoreductase (cytochrome b-c1 complex, complex III, CIII) and cytochrome c oxidase (complex IV, CIV), that cooperate to transfer electrons derived from NADH and succinate to molecular oxygen, creating an electrochemical gradient over the inner membrane that drives transmembrane transport and the ATP synthase. Cytochrome c oxidase is the component of the respiratory chain that catalyzes the reduction of oxygen to water. Electrons originating from reduced cytochrome c in the intermembrane space (IMS) are transferred via the dinuclear copper A center (CU(A)) of subunit 2 and heme A of subunit 1 to the active site in subunit 1, a binuclear center (BNC) formed by heme A3 and copper B (CU(B)). The BNC reduces molecular oxygen to 2 water molecules using 4 electrons from cytochrome c in the IMS and 4 protons from the mitochondrial matrix. This is Cytochrome c oxidase subunit 3 (MT-CO3) from Petromyzon marinus (Sea lamprey).